The sequence spans 311 residues: Aspartate carbamoyltransferase catalytic subunit (311 aa).

The carbamoyl phosphate site is built by arginine 55 and threonine 56. Lysine 85 is an L-aspartate binding site. 3 residues coordinate carbamoyl phosphate: arginine 106, histidine 135, and glutamine 138. Positions 168 and 230 each coordinate L-aspartate. 2 residues coordinate carbamoyl phosphate: leucine 268 and proline 269.

This sequence belongs to the aspartate/ornithine carbamoyltransferase superfamily. ATCase family. Heterododecamer (2C3:3R2) of six catalytic PyrB chains organized as two trimers (C3), and six regulatory PyrI chains organized as three dimers (R2).

It catalyses the reaction carbamoyl phosphate + L-aspartate = N-carbamoyl-L-aspartate + phosphate + H(+). It participates in pyrimidine metabolism; UMP biosynthesis via de novo pathway; (S)-dihydroorotate from bicarbonate: step 2/3. Its function is as follows. Catalyzes the condensation of carbamoyl phosphate and aspartate to form carbamoyl aspartate and inorganic phosphate, the committed step in the de novo pyrimidine nucleotide biosynthesis pathway. The protein is Aspartate carbamoyltransferase catalytic subunit of Pectobacterium carotovorum subsp. carotovorum (strain PC1).